The primary structure comprises 119 residues: Large ribosomal subunit protein bL20 (119 aa).

It belongs to the bacterial ribosomal protein bL20 family.

Binds directly to 23S ribosomal RNA and is necessary for the in vitro assembly process of the 50S ribosomal subunit. It is not involved in the protein synthesizing functions of that subunit. The chain is Large ribosomal subunit protein bL20 from Metamycoplasma arthritidis (strain 158L3-1) (Mycoplasma arthritidis).